The following is a 277-amino-acid chain: Uridine-cytidine kinase 1 (277 aa).

Positions 1–10 (MASAGGGDCE) are enriched in gly residues. The segment at 1 to 29 (MASAGGGDCEGAGPEADRPHQRPFLIGVS) is disordered. Residue 30 to 38 (GGTASGKST) coordinates ATP. Residues Asp87, Tyr115, His120, Arg169, Arg178, and Gln186 each coordinate substrate. Residue Asp215 participates in ATP binding. The disordered stretch occupies residues 246–277 (RSHKRTFPEPGEHPAVLASGKRSHLESSSRPH). Thr251 is subject to Phosphothreonine. Positions 268-277 (SHLESSSRPH) are enriched in basic and acidic residues.

Belongs to the uridine kinase family.

It carries out the reaction uridine + ATP = UMP + ADP + H(+). The catalysed reaction is cytidine + ATP = CMP + ADP + H(+). Its pathway is pyrimidine metabolism; CTP biosynthesis via salvage pathway; CTP from cytidine: step 1/3. It functions in the pathway pyrimidine metabolism; UMP biosynthesis via salvage pathway; UMP from uridine: step 1/1. Phosphorylates uridine and cytidine to uridine monophosphate and cytidine monophosphate. Does not phosphorylate deoxyribonucleosides or purine ribonucleosides. Can use ATP or GTP as a phosphate donor. The chain is Uridine-cytidine kinase 1 (UCK1) from Bos taurus (Bovine).